The sequence spans 120 residues: Large ribosomal subunit protein uL18 (120 aa).

The protein belongs to the universal ribosomal protein uL18 family. In terms of assembly, part of the 50S ribosomal subunit; part of the 5S rRNA/L5/L18/L25 subcomplex. Contacts the 5S and 23S rRNAs.

Its function is as follows. This is one of the proteins that bind and probably mediate the attachment of the 5S RNA into the large ribosomal subunit, where it forms part of the central protuberance. This Brevibacillus brevis (strain 47 / JCM 6285 / NBRC 100599) protein is Large ribosomal subunit protein uL18.